We begin with the raw amino-acid sequence, 1563 residues long: Integrator complex subunit 5-like protein (1563 aa).

Composition is skewed to basic and acidic residues over residues methionine 1 to asparagine 21 and glutamate 31 to asparagine 44. Disordered regions lie at residues methionine 1–aspartate 63, lysine 102–tyrosine 208, and asparagine 270–proline 310. Residues glycine 52–aspartate 63 are compositionally biased toward acidic residues. 2 stretches are compositionally biased toward low complexity: residues threonine 109 to alanine 133 and asparagine 141 to asparagine 202. A helical transmembrane segment spans residues aspartate 350 to leucine 370. The span at glutamine 381–glutamine 398 shows a compositional bias: low complexity. 4 disordered regions span residues glutamine 381 to isoleucine 417, serine 466 to threonine 498, phenylalanine 637 to serine 694, and isoleucine 784 to isoleucine 828. Positions phenylalanine 405–arginine 414 are enriched in pro residues. 3 stretches are compositionally biased toward low complexity: residues serine 468 to serine 496, asparagine 639 to asparagine 686, and asparagine 786 to glutamine 824. A helical membrane pass occupies residues isoleucine 877–leucine 897. 2 disordered regions span residues serine 1154–glycine 1173 and lysine 1268–glutamate 1303. Residues glycine 1160–tyrosine 1172 are compositionally biased toward acidic residues. Low complexity predominate over residues serine 1277–glutamine 1288. Over residues glutamine 1289–glutamate 1303 the composition is skewed to acidic residues.

This sequence belongs to the Integrator subunit 5 family. Component of the Integrator complex. The core complex associates with protein phosphatase 2A subunits, to form the Integrator-PP2A (INTAC) complex.

The protein resides in the nucleus. It is found in the cytoplasm. Its subcellular location is the nucleus membrane. Functionally, component of the integrator complex, a multiprotein complex that terminates RNA polymerase II (Pol II) transcription in the promoter-proximal region of genes. The integrator complex provides a quality checkpoint during transcription elongation by driving premature transcription termination of transcripts that are unfavorably configured for transcriptional elongation: the complex terminates transcription by (1) catalyzing dephosphorylation of the C-terminal domain (CTD) of Pol II subunit polr2a, (2) degrading the exiting nascent RNA transcript via endonuclease activity and (3) promoting the release of Pol II from bound DNA. The integrator complex is also involved in terminating the synthesis of non-coding Pol II transcripts, such as enhancer RNAs (eRNAs), small nuclear RNAs (snRNAs), telomerase RNAs and long non-coding RNAs (lncRNAs). This chain is Integrator complex subunit 5-like protein, found in Dictyostelium discoideum (Social amoeba).